Reading from the N-terminus, the 240-residue chain is tRNA (guanine-N(7)-)-methyltransferase (240 aa).

The tract at residues 1-20 (MTESHDTPITPDGEARPHRR) is disordered. S-adenosyl-L-methionine-binding residues include E70, E95, D122, and D145. The active site involves D145. Substrate contacts are provided by residues K149, D181, and 218-221 (TKFE).

It belongs to the class I-like SAM-binding methyltransferase superfamily. TrmB family.

The enzyme catalyses guanosine(46) in tRNA + S-adenosyl-L-methionine = N(7)-methylguanosine(46) in tRNA + S-adenosyl-L-homocysteine. Its pathway is tRNA modification; N(7)-methylguanine-tRNA biosynthesis. In terms of biological role, catalyzes the formation of N(7)-methylguanine at position 46 (m7G46) in tRNA. The protein is tRNA (guanine-N(7)-)-methyltransferase of Pseudomonas putida (strain ATCC 47054 / DSM 6125 / CFBP 8728 / NCIMB 11950 / KT2440).